Reading from the N-terminus, the 1035-residue chain is Protein SEY1 homolog (1035 aa).

In terms of domain architecture, GB1/RHD3-type G spans 32-267 (DGTFICVSVF…TTLIPLTDSS (236 aa)). Position 42–49 (42–49 (GPQSSGKS)) interacts with GTP.

The protein belongs to the TRAFAC class dynamin-like GTPase superfamily. GB1/RHD3 GTPase family. RHD3 subfamily.

The protein localises to the endoplasmic reticulum membrane. Functionally, probable GTP-binding protein that may be involved in cell development. The sequence is that of Protein SEY1 homolog from Giardia intestinalis (strain ATCC 50803 / WB clone C6) (Giardia lamblia).